The sequence spans 340 residues: Transcription initiation factor IIB (340 aa).

The TFIIB-type zinc-finger motif lies at Val16–Gly49. Residues Cys20, Cys23, Cys41, and Cys44 each contribute to the Zn(2+) site. Repeat copies occupy residues Met128 to Arg204 and Phe239 to Ala315.

This sequence belongs to the TFIIB family. Associates with TFIID-IIA (DA complex) to form TFIID-IIA-IIB (DAB-complex) which is then recognized by polymerase II.

It localises to the nucleus. General factor that plays a major role in the activation of eukaryotic genes transcribed by RNA polymerase II. This chain is Transcription initiation factor IIB (sua7), found in Schizosaccharomyces pombe (strain 972 / ATCC 24843) (Fission yeast).